The chain runs to 516 residues: uncharacterized protein (516 aa).

The uDENN domain maps to 31 to 185 (ACIFLSKFDM…LDKFDIFEKF (155 aa)). The region spanning 211–365 (HLVEYLPYWT…LEVYEKLILG (155 aa)) is the cDENN domain. Positions 367–513 (LQEDASTNAT…DISNLPECLG (147 aa)) constitute a dDENN domain. S-palmitoyl cysteine attachment occurs at residues Cys-511 and Cys-516.

In terms of processing, palmitoylated by AKR1.

The protein localises to the lipid droplet. Functionally, may be involved in lipid metabolism. This is an uncharacterized protein from Saccharomyces cerevisiae (strain ATCC 204508 / S288c) (Baker's yeast).